Reading from the N-terminus, the 252-residue chain is Probable transcriptional regulatory protein Caur_1043 (252 aa).

Positions Met1–Lys14 are enriched in basic residues. Residues Met1–Gly22 form a disordered region.

The protein belongs to the TACO1 family.

The protein localises to the cytoplasm. The chain is Probable transcriptional regulatory protein Caur_1043 from Chloroflexus aurantiacus (strain ATCC 29366 / DSM 635 / J-10-fl).